Here is a 408-residue protein sequence, read N- to C-terminus: Imidazolonepropionase (408 aa).

Fe(3+) contacts are provided by His73 and His75. The Zn(2+) site is built by His73 and His75. 3 residues coordinate 4-imidazolone-5-propanoate: Arg82, Tyr145, and His178. Tyr145 is an N-formimidoyl-L-glutamate binding site. His243 serves as a coordination point for Fe(3+). His243 lines the Zn(2+) pocket. Gln246 contributes to the 4-imidazolone-5-propanoate binding site. Asp318 provides a ligand contact to Fe(3+). Position 318 (Asp318) interacts with Zn(2+). Residues Asn320 and Gly322 each coordinate N-formimidoyl-L-glutamate. Ser323 is a 4-imidazolone-5-propanoate binding site.

This sequence belongs to the metallo-dependent hydrolases superfamily. HutI family. Requires Zn(2+) as cofactor. Fe(3+) is required as a cofactor.

Its subcellular location is the cytoplasm. The enzyme catalyses 4-imidazolone-5-propanoate + H2O = N-formimidoyl-L-glutamate. It participates in amino-acid degradation; L-histidine degradation into L-glutamate; N-formimidoyl-L-glutamate from L-histidine: step 3/3. In terms of biological role, catalyzes the hydrolytic cleavage of the carbon-nitrogen bond in imidazolone-5-propanoate to yield N-formimidoyl-L-glutamate. It is the third step in the universal histidine degradation pathway. This Shewanella baltica (strain OS185) protein is Imidazolonepropionase.